A 782-amino-acid polypeptide reads, in one-letter code: E3 UFM1-protein ligase 1 homolog (782 aa).

The disordered stretch occupies residues 405-478 (VSTQELEDDG…TRGGGGASKK (74 aa)).

It belongs to the UFL1 family.

In terms of biological role, E3 UFM1-protein ligase that mediates ufmylation of target proteins. The protein is E3 UFM1-protein ligase 1 homolog of Drosophila simulans (Fruit fly).